The chain runs to 574 residues: E3 ubiquitin-protein ligase TRIM23 (574 aa).

The segment at 31–76 (CGVCEDVFSLQGDKVPRLLLCGHTVCHDCLTRLPLHGRAIRCPFDR) adopts an RING-type; degenerate zinc-finger fold. The B box-type; degenerate zinc-finger motif lies at 122–168 (ESIIRCDEDEAHVASVYCTVCATHLCSDCSQVTHSTKTLAKHRRVPL). Residues 352 to 379 (RVVLAKQEITRLLETLQKQQQQFTEVAD) are a coiled coil. The interval 390-574 (TFTKDNRVHI…LVAAGVLDVA (185 aa)) is ARF-like. Residues 411-418 (GLDGAGKT), 454-458 (DVGGK), and 513-516 (NKQD) each bind GTP.

The protein in the C-terminal section; belongs to the small GTPase superfamily. Arf family. As to quaternary structure, homodimer. Interacts with PSCD1. Interacts with UBE2D2. Interacts with TBK1 (via N-terminal kinase domain) and p62/SQSTM1.

The protein localises to the cytoplasm. The protein resides in the endomembrane system. It is found in the golgi apparatus membrane. It localises to the lysosome membrane. It carries out the reaction S-ubiquitinyl-[E2 ubiquitin-conjugating enzyme]-L-cysteine + [acceptor protein]-L-lysine = [E2 ubiquitin-conjugating enzyme]-L-cysteine + N(6)-ubiquitinyl-[acceptor protein]-L-lysine.. It participates in protein modification; protein ubiquitination. Acts as an E3 ubiquitin-protein ligase. Plays an essential role in autophagy activation during viral infection. Mechanistically, activates TANK-binding kinase 1/TBK1 by facilitating its dimerization and ability to phosphorylate the selective autophagy receptor SQSTM1. In order to achieve this function, TRIM23 mediates 'Lys-27'-linked auto-ubiquitination of its ADP-ribosylation factor (ARF) domain to induce its GTPase activity and its recruitment to autophagosomes. In Mus musculus (Mouse), this protein is E3 ubiquitin-protein ligase TRIM23 (Trim23).